We begin with the raw amino-acid sequence, 79 residues long: Small ribosomal subunit protein bS18 (79 aa).

This sequence belongs to the bacterial ribosomal protein bS18 family. In terms of assembly, part of the 30S ribosomal subunit. Forms a tight heterodimer with protein bS6.

Binds as a heterodimer with protein bS6 to the central domain of the 16S rRNA, where it helps stabilize the platform of the 30S subunit. The polypeptide is Small ribosomal subunit protein bS18 (Blochmanniella pennsylvanica (strain BPEN)).